A 956-amino-acid polypeptide reads, in one-letter code: Glutamate receptor ionotropic, kainate 4 (956 aa).

Residues 1–20 (MPRVSAPLVLLPAWLVMVAC) form the signal peptide. The Extracellular portion of the chain corresponds to 21-545 (SPHSLRIAAI…YFSFLDPFSP (525 aa)). N158, N220, N272, N286, N323, N408, N415, and N479 each carry an N-linked (GlcNAc...) asparagine glycan. Residues G500, T502, and R507 each contribute to the L-glutamate site. Residues 546-566 (GVWLFMLLAYLAVSCVLFLVA) form a helical membrane-spanning segment. Residues 567-623 (RLTPYEWYSPHPCAQGRCNLLVNQYSLGNSLWFPVGGFMQQGSTIAPRALSTRCVSG) are Cytoplasmic-facing. Residues 624 to 644 (VWWAFTLIIISSYTANLAAFL) form a helical membrane-spanning segment. Residues 645 to 804 (TVQRMDVPIE…HRAKGLGMEN (160 aa)) lie on the Extracellular side of the membrane. 3 residues coordinate L-glutamate: S674, S675, and E723. N736 is a glycosylation site (N-linked (GlcNAc...) asparagine). A helical transmembrane segment spans residues 805-825 (IGGIFVVLICGLIVAIFMAML). Residues 826–956 (EFLWTLRHSE…EKTTNSSEPE (131 aa)) lie on the Cytoplasmic side of the membrane. Disordered stretches follow at residues 863–889 (RRRA…TLSN) and 931–956 (LRAR…SEPE). The span at 939-948 (RSEESLEWEK) shows a compositional bias: basic and acidic residues.

This sequence belongs to the glutamate-gated ion channel (TC 1.A.10.1) family. GRIK4 subfamily. As to quaternary structure, homodimer. Can form functional heteromeric receptors with GRIK1, GRIK2 and GRIK3.

Its subcellular location is the cell membrane. It is found in the postsynaptic cell membrane. It localises to the presynaptic cell membrane. In terms of biological role, ionotropic glutamate receptor that functions as a cation-permeable ligand-gated ion channel. Cannot form functional channels on its own. Shows channel activity only in heteromeric assembly with GRIK1, GRIK2 and GRIK3 subunits. This Homo sapiens (Human) protein is Glutamate receptor ionotropic, kainate 4 (GRIK4).